Reading from the N-terminus, the 859-residue chain is MVSIAFYGGIPGGISTPITQQSEKSKCEENTMFQPYCYNNDSKNSMAESKEARDQEMNLKEESKEEKRRNDWWEIGMFLLCLAGTTGGILWWYEGLPQQHYIGLVAIGGRLNGSGQSNAIECWGSFPGCRPFQNYFSYETNRSMHMDNNTATLLEAYHREIAFIYKSSCTDSDHCQEYQCKKVNLNSSDSSNSVRVEDVTNTAEYWGFKWLECNQTEHFKTILVPENEMVNINDTDTWIPKGCNETWARVKRCPIDILYGIHPIRLCVQPPFFLVQEKGIADTSRIGNCGPTIFLGVLEDNKGVVRGDYTACNVRRLNINRKDYTGIYQVPIFYTCTFTNITSCNNEPIISVIMYETNQVQYLLCNNNNSNNYNCVVQSFGVIGQAHLELPRPNKRIRNQSFNQYNCSINNKTELETWNLVNTSGLTPLPISSEANTGLIRHKRDFGISAIVAAIVAATAIAASATMSYVALTEVNKIMEVQNHTFEVENSTLNGMDLIERQIKILYAMILQTHADVQLLKERQQVEETFNLIGCIERTHVFCHTGHPWNMSWGHLNESTQWDDWVSKMEDLNQEILTTLHGARNNLAQSMITFNTPDSIAQFGKDLWSHIGNWIPGLGASIIKYIVMFLLIYLLLTSSPKILRALWKVTSGAGSSGSRYLKKKFHHKHASREDTWDQAQHSIHLAGVTGGSGDKYYKQKYSRNDWNGESEEYNRRPKSWVKSIEAFGESYISEKTKGEISQPGAAINEHKNGSGGNNPHQGSLDLEIRSEGGNIYDCCIKAQEGTLAIPCCGFPLWLFWGLVIIVGRIAGYGLRGLAVIIRICIRGLNLIFEIIRKMLDYIGRALNPGTSHVSMPQYV.

Positions 1-6 (MVSIAF) are excised as a propeptide. Topologically, residues 7–614 (YGGIPGGIST…KDLWSHIGNW (608 aa)) are extracellular. Asparagine 40, asparagine 112, asparagine 141, asparagine 148, asparagine 186, asparagine 214, asparagine 233, asparagine 244, asparagine 340, asparagine 368, asparagine 399, asparagine 406, asparagine 411, and asparagine 422 each carry an N-linked (GlcNAc...) asparagine; by host glycan. Residues 446 to 466 (FGISAIVAAIVAATAIAASAT) form a fusion peptide region. N-linked (GlcNAc...) asparagine; by host glycans are attached at residues asparagine 483 and asparagine 490. Residues 498-513 (LIERQIKILYAMILQT) are immunosuppression. N-linked (GlcNAc...) asparagine; by host glycans are attached at residues asparagine 550 and asparagine 557. Coiled-coil stretches lie at residues 576–624 (ILTT…SIIK) and 663–699 (KKFHHKHASREDTWDQAQHSIHLAGVTGGSGDKYYKQ). A helical membrane pass occupies residues 615–635 (IPGLGASIIKYIVMFLLIYLL). The Cytoplasmic portion of the chain corresponds to 636 to 859 (LTSSPKILRA…TSHVSMPQYV (224 aa)). The tract at residues 745 to 764 (AAINEHKNGSGGNNPHQGSL) is disordered.

As to quaternary structure, the mature envelope protein (Env) consists of a trimer of SU-TM heterodimers attached by noncovalent interactions or by a labile interchain disulfide bond. Post-translationally, specific enzymatic cleavages in vivo yield mature proteins. Envelope glycoproteins are synthesized as an inactive precursor that is N-glycosylated and processed likely by host cell furin or by a furin-like protease in the Golgi to yield the mature SU and TM proteins. The cleavage site between SU and TM requires the minimal sequence [KR]-X-[KR]-R.

Its subcellular location is the virion membrane. The protein resides in the host cell membrane. The surface protein (SU) attaches the virus to the host cell by binding to its receptor. This interaction triggers the refolding of the transmembrane protein (TM) and is thought to activate its fusogenic potential by unmasking its fusion peptide. Fusion occurs at the host cell plasma membrane. Its function is as follows. The transmembrane protein (TM) acts as a class I viral fusion protein. Under the current model, the protein has at least 3 conformational states: pre-fusion native state, pre-hairpin intermediate state, and post-fusion hairpin state. During viral and target cell membrane fusion, the coiled coil regions (heptad repeats) assume a trimer-of-hairpins structure, positioning the fusion peptide in close proximity to the C-terminal region of the ectodomain. The formation of this structure appears to drive apposition and subsequent fusion of viral and target cell membranes. Membranes fusion leads to delivery of the nucleocapsid into the cytoplasm. This is Envelope glycoprotein (env) from Equus asinus (Donkey).